The chain runs to 261 residues: 4-hydroxy-tetrahydrodipicolinate reductase (261 aa).

NAD(+)-binding positions include 11–16, 96–98, and 122–125; these read GFTGAM, GTT, and APNF. Catalysis depends on histidine 152, which acts as the Proton donor/acceptor. Histidine 153 is a binding site for (S)-2,3,4,5-tetrahydrodipicolinate. Residue lysine 156 is the Proton donor of the active site. 162 to 163 lines the (S)-2,3,4,5-tetrahydrodipicolinate pocket; sequence GT.

Belongs to the DapB family.

The protein localises to the cytoplasm. It catalyses the reaction (S)-2,3,4,5-tetrahydrodipicolinate + NAD(+) + H2O = (2S,4S)-4-hydroxy-2,3,4,5-tetrahydrodipicolinate + NADH + H(+). The enzyme catalyses (S)-2,3,4,5-tetrahydrodipicolinate + NADP(+) + H2O = (2S,4S)-4-hydroxy-2,3,4,5-tetrahydrodipicolinate + NADPH + H(+). It functions in the pathway amino-acid biosynthesis; L-lysine biosynthesis via DAP pathway; (S)-tetrahydrodipicolinate from L-aspartate: step 4/4. In terms of biological role, catalyzes the conversion of 4-hydroxy-tetrahydrodipicolinate (HTPA) to tetrahydrodipicolinate. The sequence is that of 4-hydroxy-tetrahydrodipicolinate reductase from Lactobacillus acidophilus (strain ATCC 700396 / NCK56 / N2 / NCFM).